A 294-amino-acid polypeptide reads, in one-letter code: ATP synthase gamma chain (294 aa).

The protein belongs to the ATPase gamma chain family. F-type ATPases have 2 components, CF(1) - the catalytic core - and CF(0) - the membrane proton channel. CF(1) has five subunits: alpha(3), beta(3), gamma(1), delta(1), epsilon(1). CF(0) has three main subunits: a, b and c.

It localises to the cell membrane. In terms of biological role, produces ATP from ADP in the presence of a proton gradient across the membrane. The gamma chain is believed to be important in regulating ATPase activity and the flow of protons through the CF(0) complex. This is ATP synthase gamma chain from Opitutus terrae (strain DSM 11246 / JCM 15787 / PB90-1).